We begin with the raw amino-acid sequence, 273 residues long: Putative phosphoenolpyruvate synthase regulatory protein (273 aa).

An ADP-binding site is contributed by 154-161 (GVSRSGKT).

Belongs to the pyruvate, phosphate/water dikinase regulatory protein family. PSRP subfamily.

It catalyses the reaction [pyruvate, water dikinase] + ADP = [pyruvate, water dikinase]-phosphate + AMP + H(+). The enzyme catalyses [pyruvate, water dikinase]-phosphate + phosphate + H(+) = [pyruvate, water dikinase] + diphosphate. Functionally, bifunctional serine/threonine kinase and phosphorylase involved in the regulation of the phosphoenolpyruvate synthase (PEPS) by catalyzing its phosphorylation/dephosphorylation. The chain is Putative phosphoenolpyruvate synthase regulatory protein from Neisseria gonorrhoeae (strain ATCC 700825 / FA 1090).